A 98-amino-acid chain; its full sequence is Large ribosomal subunit protein uL23 (98 aa).

Belongs to the universal ribosomal protein uL23 family. As to quaternary structure, part of the 50S ribosomal subunit. Contacts protein L29, and trigger factor when it is bound to the ribosome.

Functionally, one of the early assembly proteins it binds 23S rRNA. One of the proteins that surrounds the polypeptide exit tunnel on the outside of the ribosome. Forms the main docking site for trigger factor binding to the ribosome. The polypeptide is Large ribosomal subunit protein uL23 (Methylobacterium radiotolerans (strain ATCC 27329 / DSM 1819 / JCM 2831 / NBRC 15690 / NCIMB 10815 / 0-1)).